Reading from the N-terminus, the 594-residue chain is Phostensin (594 aa).

2 stretches are compositionally biased toward basic and acidic residues: residues glutamate 18–leucine 33 and valine 109–serine 125. Disordered regions lie at residues glutamate 18–valine 238 and valine 294–arginine 485. Residues serine 126, serine 134, serine 174, and serine 194 each carry the phosphoserine modification. 2 stretches are compositionally biased toward basic and acidic residues: residues glutamine 133–leucine 155 and serine 167–lysine 190. Residue threonine 198 is modified to Phosphothreonine. Position 224 is a phosphoserine (serine 224). Residues glutamate 353–glutamate 364 are compositionally biased toward acidic residues. Over residues proline 403–proline 421 the composition is skewed to pro residues. Serine 412 is subject to Phosphoserine. At lysine 437 the chain carries N6-acetyllysine. The residue at position 510 (serine 510) is a Phosphoserine. Positions tyrosine 531–leucine 577 are disordered. A compositionally biased stretch (acidic residues) spans proline 558–leucine 571.

As to quaternary structure, interacts with Protein phosphatase 1 (PP1).

The protein localises to the cytoplasm. It is found in the cytoskeleton. Its function is as follows. May target protein phosphatase 1 to F-actin cytoskeleton. This chain is Phostensin (Ppp1r18), found in Mus musculus (Mouse).